The chain runs to 172 residues: Protein GrpE (172 aa).

It belongs to the GrpE family. Homodimer.

It is found in the cytoplasm. Participates actively in the response to hyperosmotic and heat shock by preventing the aggregation of stress-denatured proteins, in association with DnaK and GrpE. It is the nucleotide exchange factor for DnaK and may function as a thermosensor. Unfolded proteins bind initially to DnaJ; upon interaction with the DnaJ-bound protein, DnaK hydrolyzes its bound ATP, resulting in the formation of a stable complex. GrpE releases ADP from DnaK; ATP binding to DnaK triggers the release of the substrate protein, thus completing the reaction cycle. Several rounds of ATP-dependent interactions between DnaJ, DnaK and GrpE are required for fully efficient folding. The chain is Protein GrpE from Thermotoga maritima (strain ATCC 43589 / DSM 3109 / JCM 10099 / NBRC 100826 / MSB8).